The sequence spans 207 residues: Putative zinc finger protein 137 (207 aa).

Residues 72–94 (CKCNDCHKVFSNATTIANHWRIH) form a C2H2-type 1 zinc finger. Residues 100–122 (YKCNKCGKIFRHRSYLAVYQRTH) form a C2H2-type 2; degenerate zinc finger. Residues 128–150 (YKYHDCGKVFSQASSYAKHRRIH) form a C2H2-type 3; degenerate zinc finger. C2H2-type zinc fingers lie at residues 156-178 (HKCDDCGKVLTSRSHLIRHQRIH) and 184-206 (YKCLKCGKVFSLWALHAEHQKIH).

This sequence belongs to the krueppel C2H2-type zinc-finger protein family.

The protein localises to the nucleus. Its function is as follows. May be involved in transcriptional regulation. The protein is Putative zinc finger protein 137 (ZNF137P) of Homo sapiens (Human).